A 344-amino-acid chain; its full sequence is N-acetyl-gamma-glutamyl-phosphate reductase (344 aa).

Cysteine 149 is a catalytic residue.

This sequence belongs to the NAGSA dehydrogenase family. Type 1 subfamily.

The protein localises to the cytoplasm. The catalysed reaction is N-acetyl-L-glutamate 5-semialdehyde + phosphate + NADP(+) = N-acetyl-L-glutamyl 5-phosphate + NADPH + H(+). The protein operates within amino-acid biosynthesis; L-arginine biosynthesis; N(2)-acetyl-L-ornithine from L-glutamate: step 3/4. In terms of biological role, catalyzes the NADPH-dependent reduction of N-acetyl-5-glutamyl phosphate to yield N-acetyl-L-glutamate 5-semialdehyde. The sequence is that of N-acetyl-gamma-glutamyl-phosphate reductase from Acidithiobacillus ferrooxidans (strain ATCC 23270 / DSM 14882 / CIP 104768 / NCIMB 8455) (Ferrobacillus ferrooxidans (strain ATCC 23270)).